A 62-amino-acid polypeptide reads, in one-letter code: Statherin (62 aa).

The first 19 residues, M1–A19, serve as a signal peptide directing secretion. Positions D20–K25 are hydroxyapatite-binding; inhibits crystal growth. Phosphoserine is present on residues S21 and S22. The segment at residues K25 to Q56 is a cross-link (isoglutamyl lysine isopeptide (Lys-Gln); in form cyclo-statherin Q-37). Positions K25 to Q58 form a cross-link, isoglutamyl lysine isopeptide (Lys-Gln); in form cyclo-statherin Q-39. A hydrophobic; inhibits precipitation of calcium phosphate salts region spans residues G38–F62.

Belongs to the histatin/statherin family. Substrate for transglutaminase-2. More than 95% of the cyclized peptide is cyclo-statherin Q-37, and less than 5% is cyclo-statherin Q-39. Cyclized forms account for about 1% of total statherin in saliva. In terms of processing, sulfated on tyrosine residues. In terms of tissue distribution, secreted by parotid and submandibular glands.

It localises to the secreted. Its function is as follows. Salivary protein that stabilizes saliva supersaturated with calcium salts by inhibiting the precipitation of calcium phosphate salts. It also modulates hydroxyapatite crystal formation on the tooth surface. This Homo sapiens (Human) protein is Statherin (STATH).